Consider the following 751-residue polypeptide: Ribosomal RNA large subunit methyltransferase K/L (751 aa).

Positions 44 to 155 (LAYRTCLWSR…KNKLVLSIDL (112 aa)) constitute a THUMP domain.

Belongs to the methyltransferase superfamily. RlmKL family.

It localises to the cytoplasm. It catalyses the reaction guanosine(2445) in 23S rRNA + S-adenosyl-L-methionine = N(2)-methylguanosine(2445) in 23S rRNA + S-adenosyl-L-homocysteine + H(+). The catalysed reaction is guanosine(2069) in 23S rRNA + S-adenosyl-L-methionine = N(2)-methylguanosine(2069) in 23S rRNA + S-adenosyl-L-homocysteine + H(+). In terms of biological role, specifically methylates the guanine in position 2445 (m2G2445) and the guanine in position 2069 (m7G2069) of 23S rRNA. In Cellvibrio japonicus (strain Ueda107) (Pseudomonas fluorescens subsp. cellulosa), this protein is Ribosomal RNA large subunit methyltransferase K/L.